Reading from the N-terminus, the 86-residue chain is Small ribosomal subunit protein uS17 (86 aa).

This sequence belongs to the universal ribosomal protein uS17 family. In terms of assembly, part of the 30S ribosomal subunit.

In terms of biological role, one of the primary rRNA binding proteins, it binds specifically to the 5'-end of 16S ribosomal RNA. In Streptococcus gordonii (strain Challis / ATCC 35105 / BCRC 15272 / CH1 / DL1 / V288), this protein is Small ribosomal subunit protein uS17.